A 256-amino-acid chain; its full sequence is Chitinase 11 (256 aa).

The signal sequence occupies residues 1–22; the sequence is MRRLLPLAGATLLIAAAGGASG. Disulfide bonds link cysteine 48/cysteine 109 and cysteine 214/cysteine 247. The active-site Proton donor is glutamate 91.

Belongs to the glycosyl hydrolase 19 family. Chitinase class II subfamily. In terms of tissue distribution, expressed in leaves and at lower levels in roots, sheaths and meristems.

It catalyses the reaction Random endo-hydrolysis of N-acetyl-beta-D-glucosaminide (1-&gt;4)-beta-linkages in chitin and chitodextrins.. In Oryza sativa subsp. japonica (Rice), this protein is Chitinase 11 (Cht11).